Consider the following 179-residue polypeptide: Large ribosomal subunit protein uL10 (179 aa).

Residues 137–179 form a binds L7/L12 dimers region; it reads KEELYAMLVGRVKAPITGLVFALSGILRNLVYVLNAIKEKKSE.

In terms of assembly, part of the ribosomal stalk of the 50S ribosomal subunit. The N-terminus interacts with L11 and 23S rRNA to form the base of the stalk. The C-terminus forms an elongated spine to which 3 L12 dimers bind in a sequential fashion forming a heptameric L10(L12)2(L12)2(L12)2 complex.

In terms of biological role, forms part of the ribosomal stalk, playing a central role in the interaction of the ribosome with GTP-bound translation factors (such as IF-2, EF-Tu, EF-G and RF3). This Thermotoga maritima (strain ATCC 43589 / DSM 3109 / JCM 10099 / NBRC 100826 / MSB8) protein is Large ribosomal subunit protein uL10 (rplJ).